We begin with the raw amino-acid sequence, 159 residues long: uncharacterized protein (159 aa).

This is an uncharacterized protein from Methanocaldococcus jannaschii (strain ATCC 43067 / DSM 2661 / JAL-1 / JCM 10045 / NBRC 100440) (Methanococcus jannaschii).